Reading from the N-terminus, the 957-residue chain is Glycine dehydrogenase (decarboxylating) (957 aa).

Lys708 bears the N6-(pyridoxal phosphate)lysine mark.

This sequence belongs to the GcvP family. In terms of assembly, the glycine cleavage system is composed of four proteins: P, T, L and H. The cofactor is pyridoxal 5'-phosphate.

It carries out the reaction N(6)-[(R)-lipoyl]-L-lysyl-[glycine-cleavage complex H protein] + glycine + H(+) = N(6)-[(R)-S(8)-aminomethyldihydrolipoyl]-L-lysyl-[glycine-cleavage complex H protein] + CO2. Its function is as follows. The glycine cleavage system catalyzes the degradation of glycine. The P protein binds the alpha-amino group of glycine through its pyridoxal phosphate cofactor; CO(2) is released and the remaining methylamine moiety is then transferred to the lipoamide cofactor of the H protein. In Salmonella paratyphi B (strain ATCC BAA-1250 / SPB7), this protein is Glycine dehydrogenase (decarboxylating).